The sequence spans 360 residues: Peptide chain release factor 1 (360 aa).

The residue at position 235 (Q235) is an N5-methylglutamine. The segment at 284 to 304 is disordered; that stretch reads KVDSERSADRKSQVGSGDRSE.

It belongs to the prokaryotic/mitochondrial release factor family. In terms of processing, methylated by PrmC. Methylation increases the termination efficiency of RF1.

Its subcellular location is the cytoplasm. In terms of biological role, peptide chain release factor 1 directs the termination of translation in response to the peptide chain termination codons UAG and UAA. This is Peptide chain release factor 1 from Agrobacterium fabrum (strain C58 / ATCC 33970) (Agrobacterium tumefaciens (strain C58)).